The chain runs to 362 residues: 3-dehydroquinate synthase (362 aa).

NAD(+) is bound by residues 72 to 77 (SGEEAK), 106 to 110 (GVTGD), 130 to 131 (TT), K142, and K151. The Zn(2+) site is built by E184, H246, and H263.

This sequence belongs to the sugar phosphate cyclases superfamily. Dehydroquinate synthase family. Co(2+) serves as cofactor. The cofactor is Zn(2+). Requires NAD(+) as cofactor.

It is found in the cytoplasm. It carries out the reaction 7-phospho-2-dehydro-3-deoxy-D-arabino-heptonate = 3-dehydroquinate + phosphate. It functions in the pathway metabolic intermediate biosynthesis; chorismate biosynthesis; chorismate from D-erythrose 4-phosphate and phosphoenolpyruvate: step 2/7. In terms of biological role, catalyzes the conversion of 3-deoxy-D-arabino-heptulosonate 7-phosphate (DAHP) to dehydroquinate (DHQ). This Bacillus velezensis (strain DSM 23117 / BGSC 10A6 / LMG 26770 / FZB42) (Bacillus amyloliquefaciens subsp. plantarum) protein is 3-dehydroquinate synthase.